Consider the following 370-residue polypeptide: Platelet-derived growth factor D (370 aa).

Positions 1–18 (MHRLIFVYTLICANFCSC) are cleaved as a signal peptide. Residues 52–170 (RDETIQVKGN…PGFKIYYSLL (119 aa)) form the CUB domain. The cysteines at positions 109 and 131 are disulfide-linked. N-linked (GlcNAc...) asparagine glycosylation is present at N276. Cystine bridges form between C302–C360 and C306–C362.

This sequence belongs to the PDGF/VEGF growth factor family. In terms of assembly, homodimer; disulfide-linked. Interacts with PDGFRB homodimers, and with heterodimers formed by PDGFRA and PDGFRB. In terms of processing, activated by proteolytic cleavage. Proteolytic removal of the N-terminal CUB domain releasing the core domain is necessary for unmasking the receptor-binding epitopes of the core domain. Cleavage after Arg-247 or Arg-249 by urokinase plasminogen activator gives rise to the active form. Expressed at high levels in the heart, pancreas, adrenal gland and ovary and at low levels in placenta, liver, kidney, prostate, testis, small intestine, spleen and colon. In the kidney, expressed by the visceral epithelial cells of the glomeruli. A widespread expression is also seen in the medial smooth muscle cells of arteries and arterioles, as well as in smooth muscle cells of vasa rectae in the medullary area. Expressed in the adventitial connective tissue surrounding the suprarenal artery. In chronic obstructive nephropathy, a persistent expression is seen in glomerular visceral epithelial cells and vascular smooth muscle cells, as well as de novo expression by periglomerular interstitial cells and by some neointimal cells of atherosclerotic vessels. Expression in normal prostate is seen preferentially in the mesenchyme of the gland while expression is increased and more profuse in prostate carcinoma. Expressed in many ovarian, lung, renal and brain cancer-derived cell lines.

It is found in the secreted. In terms of biological role, growth factor that plays an essential role in the regulation of embryonic development, cell proliferation, cell migration, survival and chemotaxis. Potent mitogen for cells of mesenchymal origin. Plays an important role in wound healing. Induces macrophage recruitment, increased interstitial pressure, and blood vessel maturation during angiogenesis. Can initiate events that lead to a mesangial proliferative glomerulonephritis, including influx of monocytes and macrophages and production of extracellular matrix. In Homo sapiens (Human), this protein is Platelet-derived growth factor D (PDGFD).